We begin with the raw amino-acid sequence, 195 residues long: Killer cell lectin-like receptor subfamily G member 1 (195 aa).

At 1–38 (MTDSVIYSMLELPTATQAQNDYGPQQKSSSSRPSCSCL) the chain is on the cytoplasmic side. An ITIM motif motif is present at residues 5 to 10 (VIYSML). Residues 39-59 (VAIALGLLTAVLLSVLLYQWI) form a helical; Signal-anchor for type II membrane protein membrane-spanning segment. Topologically, residues 60-195 (LCQGSNYSTC…KCPFADQALF (136 aa)) are extracellular. Asn-65 is a glycosylation site (N-linked (GlcNAc...) asparagine). Cys-75 and Cys-86 form a disulfide bridge. In terms of domain architecture, C-type lectin spans 82–185 (YGNHCYYFSV…CEVPLHWVCK (104 aa)). Residues Asn-97, Asn-137, and Asn-150 are each glycosylated (N-linked (GlcNAc...) asparagine). 2 cysteine pairs are disulfide-bonded: Cys-103–Cys-184 and Cys-163–Cys-176.

In terms of assembly, forms a monomer and homodimer; disulfide-linked. Interacts (via ITIM motif) with PTPN11 and INPP5D. Expressed specifically on natural killer (NK) cells and T-cells, mainly CD8 T-cells.

The protein resides in the cell membrane. Functionally, plays an inhibitory role on natural killer (NK) cells and T-cell functions upon binding to their non-MHC ligands. May mediate missing self recognition by binding to a highly conserved site on classical cadherins, enabling it to monitor expression of E-cadherin/CDH1, N-cadherin/CDH2 and R-cadherin/CDH4 on target cells. The polypeptide is Killer cell lectin-like receptor subfamily G member 1 (KLRG1) (Homo sapiens (Human)).